Here is a 376-residue protein sequence, read N- to C-terminus: Galactoside alpha-(1,2)-fucosyltransferase 1 (376 aa).

The Cytoplasmic portion of the chain corresponds to 1 to 12 (MWTPSRKQLCLA). A helical; Signal-anchor for type II membrane protein transmembrane segment spans residues 13-29 (FLSVCVLSAGSFFFHLN). The Lumenal portion of the chain corresponds to 30–376 (GGNFFQNALT…WETDSLFRLA (347 aa)). Residues asparagine 64, asparagine 302, and asparagine 328 are each glycosylated (N-linked (GlcNAc...) asparagine).

The protein belongs to the glycosyltransferase 11 family.

Its subcellular location is the golgi apparatus. The protein resides in the golgi stack membrane. It carries out the reaction a beta-D-galactosyl-(1-&gt;4)-N-acetyl-beta-D-glucosaminyl derivative + GDP-beta-L-fucose = an alpha-L-Fuc-(1-&gt;2)-beta-D-Gal-(1-&gt;4)-beta-D-GlcNAc derivative + GDP + H(+). It catalyses the reaction a ganglioside GA1 + GDP-beta-L-fucose = a ganglioside Fuc-GA1 + GDP + H(+). The catalysed reaction is a beta-D-Gal-(1-&gt;3)-beta-D-GlcNAc-(1-&gt;3)-beta-D-Gal-(1-&gt;4)-beta-D-Glc-(1&lt;-&gt;1')-Cer(d18:1(4E)) + GDP-beta-L-fucose = alpha-L-fucosyl-(1-&gt;2)- beta-D-galactosyl-(1-&gt;3)-N-acetyl-beta-D-glucosaminyl-(1-&gt;3)-beta-D-galactosyl-(1-&gt;4)-beta-D-glucosyl-(1&lt;-&gt;1')-N-acylsphing-4-enine + GDP + H(+). The enzyme catalyses a neolactoside nLc4Cer(d18:1(4E)) + GDP-beta-L-fucose = a neolactoside IV(2)-alpha-Fuc-nLc4Cer(d18:1(4E)) + GDP + H(+). It carries out the reaction a ganglioside GM1 + GDP-beta-L-fucose = a ganglioside Fuc-GM1 + GDP + H(+). It catalyses the reaction beta-D-galactosyl-(1-&gt;3)-N-acetyl-D-galactosamine + GDP-beta-L-fucose = alpha-L-fucosyl-(1-&gt;2)-beta-D-galactosyl-(1-&gt;3)-N-acetyl-D-galactosamine + GDP + H(+). It participates in protein modification; protein glycosylation. Catalyzes the transfer of L-fucose, from a guanosine diphosphate-beta-L-fucose, to the terminal galactose residue of glycoconjugates through an alpha(1,2) linkage leading to H antigen synthesis that is an intermediate substrate in the synthesis of ABO blood group antigens. H antigen is essential for maturation of the glomerular layer of the main olfactory bulb, in cell migration and early cell-cell contacts during tumor associated angiogenesis. Preferentially fucosylates soluble lactose and to a lesser extent fucosylates glycolipids gangliosides GA1 and GM1a. This chain is Galactoside alpha-(1,2)-fucosyltransferase 1, found in Rattus norvegicus (Rat).